We begin with the raw amino-acid sequence, 358 residues long: Peroxidase 54 (358 aa).

A signal peptide spans Met1–Ala31. A Pyrrolidone carboxylic acid modification is found at Gln32. Asn34 and Asn44 each carry an N-linked (GlcNAc...) asparagine glycan. 4 cysteine pairs are disulfide-bonded: Cys42–Cys122, Cys75–Cys80, Cys128–Cys330, and Cys207–Cys239. Catalysis depends on His73, which acts as the Proton acceptor. Positions 74, 77, 79, 81, and 83 each coordinate Ca(2+). 3 N-linked (GlcNAc...) asparagine glycosylation sites follow: Asn103, Asn161, and Asn166. Pro170 contacts substrate. An N-linked (GlcNAc...) asparagine glycan is attached at Asn178. Position 200 (His200) interacts with heme b. Thr201 serves as a coordination point for Ca(2+). N-linked (GlcNAc...) asparagine glycosylation is found at Asn218, Asn228, and Asn242. Residues Asp252, Thr255, and Asp260 each coordinate Ca(2+). Residue Asn298 is glycosylated (N-linked (GlcNAc...) asparagine).

This sequence belongs to the peroxidase family. Classical plant (class III) peroxidase subfamily. Heme b serves as cofactor. Requires Ca(2+) as cofactor.

The protein localises to the secreted. It localises to the vacuole. The enzyme catalyses 2 a phenolic donor + H2O2 = 2 a phenolic radical donor + 2 H2O. Removal of H(2)O(2), oxidation of toxic reductants, biosynthesis and degradation of lignin, suberization, auxin catabolism, response to environmental stresses such as wounding, pathogen attack and oxidative stress. These functions might be dependent on each isozyme/isoform in each plant tissue. The chain is Peroxidase 54 (PER54) from Arabidopsis thaliana (Mouse-ear cress).